A 123-amino-acid polypeptide reads, in one-letter code: Large ribosomal subunit protein bL12 (123 aa).

It belongs to the bacterial ribosomal protein bL12 family. In terms of assembly, homodimer. Part of the ribosomal stalk of the 50S ribosomal subunit. Forms a multimeric L10(L12)X complex, where L10 forms an elongated spine to which 2 to 4 L12 dimers bind in a sequential fashion. Binds GTP-bound translation factors.

Its function is as follows. Forms part of the ribosomal stalk which helps the ribosome interact with GTP-bound translation factors. Is thus essential for accurate translation. This is Large ribosomal subunit protein bL12 from Hydrogenovibrio crunogenus (strain DSM 25203 / XCL-2) (Thiomicrospira crunogena).